Consider the following 388-residue polypeptide: Succinate--CoA ligase [ADP-forming] subunit beta (388 aa).

The region spanning K9 to H244 is the ATP-grasp domain. ATP contacts are provided by residues K46, G53–G55, E99, T102, and E107. Positions 199 and 213 each coordinate Mg(2+). Substrate is bound by residues N264 and G321–V323.

Belongs to the succinate/malate CoA ligase beta subunit family. In terms of assembly, heterotetramer of two alpha and two beta subunits. It depends on Mg(2+) as a cofactor.

The enzyme catalyses succinate + ATP + CoA = succinyl-CoA + ADP + phosphate. It catalyses the reaction GTP + succinate + CoA = succinyl-CoA + GDP + phosphate. It functions in the pathway carbohydrate metabolism; tricarboxylic acid cycle; succinate from succinyl-CoA (ligase route): step 1/1. In terms of biological role, succinyl-CoA synthetase functions in the citric acid cycle (TCA), coupling the hydrolysis of succinyl-CoA to the synthesis of either ATP or GTP and thus represents the only step of substrate-level phosphorylation in the TCA. The beta subunit provides nucleotide specificity of the enzyme and binds the substrate succinate, while the binding sites for coenzyme A and phosphate are found in the alpha subunit. The polypeptide is Succinate--CoA ligase [ADP-forming] subunit beta (Ectopseudomonas mendocina (strain ymp) (Pseudomonas mendocina)).